The following is a 168-amino-acid chain: ATP synthase subunit b (168 aa).

The helical transmembrane segment at 9 to 29 (SIPFGTIAYTLFIFLLLLVML) threads the bilayer.

The protein belongs to the ATPase B chain family. In terms of assembly, F-type ATPases have 2 components, F(1) - the catalytic core - and F(0) - the membrane proton channel. F(1) has five subunits: alpha(3), beta(3), gamma(1), delta(1), epsilon(1). F(0) has three main subunits: a(1), b(2) and c(10-14). The alpha and beta chains form an alternating ring which encloses part of the gamma chain. F(1) is attached to F(0) by a central stalk formed by the gamma and epsilon chains, while a peripheral stalk is formed by the delta and b chains.

It localises to the cell membrane. Functionally, f(1)F(0) ATP synthase produces ATP from ADP in the presence of a proton or sodium gradient. F-type ATPases consist of two structural domains, F(1) containing the extramembraneous catalytic core and F(0) containing the membrane proton channel, linked together by a central stalk and a peripheral stalk. During catalysis, ATP synthesis in the catalytic domain of F(1) is coupled via a rotary mechanism of the central stalk subunits to proton translocation. In terms of biological role, component of the F(0) channel, it forms part of the peripheral stalk, linking F(1) to F(0). This is ATP synthase subunit b from Bacillus mycoides (strain KBAB4) (Bacillus weihenstephanensis).